The chain runs to 464 residues: MAVYNYDVVVLGSGPAGEGAAMNAAKAGRKVAMVDSRREVGGNCTHLGTIPSKALRHSVKQIIQFNTNPMFRAIGEPRWFSFPDVLKNAEMVISKQVASRTSYYARNRVDVFFGTGSFADETSVNVVCANGVVEKLVANQIIIATGSRPYRPADIDFSHKRIYDSDTILSLGHTPRKLIIYGAGVIGCEYASIFSGLGVLVELVDNRDQLLSFLDSEISQALSYHFSNNNVMVRHNEEYERVEGLDNGVVLHLKSGKKIKADALLWCNGRTGNTDKLGLENIGLKANGRGQIEVDEAYRTSVSNVYGAGDVIGWPSLASAAYDQGRSAAGSMVDNGSWRYVNDVPTGIYTIPEISSIGKNEHELTQAKVPYEVGKAFFKGMARAQISGERVGMLKILFHRETLEVLGVHCFGDQASEIVHIGQAIMSQPGEANTIKYFVNTTFNYPTMAEAYRVAAYDGLNRLF.

35–44 (DSRREVGGNC) is a binding site for FAD.

Belongs to the class-I pyridine nucleotide-disulfide oxidoreductase family. FAD serves as cofactor.

The protein localises to the cytoplasm. The enzyme catalyses NAD(+) + NADPH = NADH + NADP(+). Conversion of NADPH, generated by peripheral catabolic pathways, to NADH, which can enter the respiratory chain for energy generation. This Pseudomonas syringae pv. tomato (strain ATCC BAA-871 / DC3000) protein is Soluble pyridine nucleotide transhydrogenase.